We begin with the raw amino-acid sequence, 461 residues long: V-type ATP synthase beta chain 1 (461 aa).

This sequence belongs to the ATPase alpha/beta chains family.

In terms of biological role, produces ATP from ADP in the presence of a proton gradient across the membrane. The V-type beta chain is a regulatory subunit. The polypeptide is V-type ATP synthase beta chain 1 (Clostridium tetani (strain Massachusetts / E88)).